The primary structure comprises 150 residues: Deoxyuridine 5'-triphosphate nucleotidohydrolase (150 aa).

Substrate-binding positions include 67–69, Asn-80, and 84–86; these read RSS and VID.

The protein belongs to the dUTPase family. Requires Mg(2+) as cofactor.

The catalysed reaction is dUTP + H2O = dUMP + diphosphate + H(+). It functions in the pathway pyrimidine metabolism; dUMP biosynthesis; dUMP from dCTP (dUTP route): step 2/2. Functionally, this enzyme is involved in nucleotide metabolism: it produces dUMP, the immediate precursor of thymidine nucleotides and it decreases the intracellular concentration of dUTP so that uracil cannot be incorporated into DNA. The chain is Deoxyuridine 5'-triphosphate nucleotidohydrolase (dut) from Lactococcus lactis subsp. lactis (strain IL1403) (Streptococcus lactis).